Reading from the N-terminus, the 252-residue chain is Petrobactin import ATP-binding protein YclP (252 aa).

Residues V2–T236 form the ABC transporter domain. An ATP-binding site is contributed by G34 to S41.

It belongs to the ABC transporter superfamily. In terms of assembly, the complex is composed of two ATP-binding proteins (YclP), two transmembrane proteins (YclN and YclO) and a solute-binding protein (YclQ).

It is found in the cell membrane. It catalyses the reaction a Fe(III)-siderophore(out) + ATP + H2O = a Fe(III)-siderophore(in) + ADP + phosphate + H(+). Functionally, part of the ABC transporter complex YclNOPQ involved in uptake of ferric-petrobactin. Petrobactin is a photoreactive 3,4-catecholate siderophore produced by many members of the B.cereus group, including B.anthracis. Probably responsible for energy coupling to the transport system. The chain is Petrobactin import ATP-binding protein YclP (yclP) from Bacillus subtilis (strain 168).